The following is a 920-amino-acid chain: Nonribosomal peptide synthetase atrA (920 aa).

The interval 13–428 is adenylation (A) domain; it reads AAAQERCGRV…AGRLKETMII (416 aa). Residues 558-637 form the Carrier domain; sequence PPKDELERSL…ELSAALHDLQ (80 aa). Ser595 carries the O-(pantetheine 4'-phosphoryl)serine modification. The segment at 656-905 is thioesterase (TE) domain; the sequence is PLWLIHPGVG…YTMLAPEHVF (250 aa).

This sequence belongs to the NRP synthetase family.

The enzyme catalyses 2 3-(4-hydroxyphenyl)pyruvate + 2 ATP = atromentin + 2 AMP + 2 diphosphate + H(+). Functionally, nonribosomal peptide synthetase that mediates the biosynthesis of atromentin. AtrA first activates 4-hydroxyphenylpyruvate (HPPA) through its A domain to AMP-HPPA. The HPPA unit is then loaded to the T domain and eventually transferred to the TE domain. Another HPPA unit is then loaded onto the T domain. The TE domain then catalyzes the condensation of the two HPPA units and the release of atromentin via cyclization. This Aspergillus terreus (strain NIH 2624 / FGSC A1156) protein is Nonribosomal peptide synthetase atrA.